The chain runs to 469 residues: Glutamate--tRNA ligase (469 aa).

The short motif at 11–21 (PSPTGFIHLGN) is the 'HIGH' region element. Positions 114–131 (QREAGEKPRYDGTWRPEP) are enriched in basic and acidic residues. Positions 114–139 (QREAGEKPRYDGTWRPEPGKVLPEPP) are disordered. Residues 243 to 247 (KMSKR) carry the 'KMSKS' region motif. Lys-246 lines the ATP pocket.

It belongs to the class-I aminoacyl-tRNA synthetase family. Glutamate--tRNA ligase type 1 subfamily. In terms of assembly, monomer.

Its subcellular location is the cytoplasm. The catalysed reaction is tRNA(Glu) + L-glutamate + ATP = L-glutamyl-tRNA(Glu) + AMP + diphosphate. Its function is as follows. Catalyzes the attachment of glutamate to tRNA(Glu) in a two-step reaction: glutamate is first activated by ATP to form Glu-AMP and then transferred to the acceptor end of tRNA(Glu). The protein is Glutamate--tRNA ligase of Paraburkholderia phytofirmans (strain DSM 17436 / LMG 22146 / PsJN) (Burkholderia phytofirmans).